Here is a 142-residue protein sequence, read N- to C-terminus: Ribonuclease VapC44 (142 aa).

The region spanning 4–126 (LLDVNVLLAL…GRFVTFDQSI (123 aa)) is the PINc domain. Mg(2+) is bound by residues Asp-6 and Asp-105.

Belongs to the PINc/VapC protein family. The cofactor is Mg(2+).

Its function is as follows. Toxic component of a type II toxin-antitoxin (TA) system. An RNase. Its cognate antitoxin is VapB44. The sequence is that of Ribonuclease VapC44 from Mycobacterium tuberculosis (strain CDC 1551 / Oshkosh).